The following is a 35-amino-acid chain: AAAAPGAAGGAQLPLGNRERKAGCKNFFWKTFSSC.

Cysteine 24 and cysteine 35 are disulfide-bonded.

Belongs to the somatostatin family.

The protein resides in the secreted. Somatostatin inhibits the release of somatotropin. The polypeptide is Somatostatin (sst) (Lampetra fluviatilis (European river lamprey)).